The following is a 30-amino-acid chain: Cliotide T20 (30 aa).

A cross-link (cyclopeptide (Gly-Asn)) is located at residues G1–N30. 3 cysteine pairs are disulfide-bonded: C6/C20, C10/C22, and C15/C27.

In terms of processing, contains 3 disulfide bonds. Post-translationally, this is a cyclic peptide. In terms of tissue distribution, expressed in root nodules but not in seed.

Its function is as follows. Probably participates in a plant defense mechanism. Active against Gram-negative bacterium E.coli ATCC 700926 (MIC=0.5 uM) under low-salt conditions. Not active against Gram-positive bacterium S.aureus ATCC 12600 up to a concentration of 100 uM under low-salt conditions. Exhibits immunomodulatory activity but no cytotoxicity in vitro. The sequence is that of Cliotide T20 from Clitoria ternatea (Butterfly pea).